The following is a 138-amino-acid chain: Basic phospholipase A2 Tpu-G6D49 (138 aa).

The N-terminal stretch at 1 to 16 (MRTLWIMAVLLVGVEG) is a signal peptide. 7 disulfide bridges follow: Cys42–Cys131, Cys44–Cys60, Cys59–Cys111, Cys65–Cys138, Cys66–Cys104, Cys73–Cys97, and Cys91–Cys102. 3 residues coordinate Ca(2+): Tyr43, Gly45, and Gly47. The active site involves His63. Position 64 (Asp64) interacts with Ca(2+). Residue Asp105 is part of the active site.

Monomer. The cofactor is Ca(2+). Expressed by the venom gland.

Its subcellular location is the secreted. It carries out the reaction a 1,2-diacyl-sn-glycero-3-phosphocholine + H2O = a 1-acyl-sn-glycero-3-phosphocholine + a fatty acid + H(+). Its function is as follows. Snake venom phospholipase A2 (PLA2) that impairs hemostasis. It weakly inhibits ADP-induced platelet aggregation when tested on platelet rich plasma from human and rabbit blood (15-25% of inhibition at 5-10 ug of enzyme), and dose-dependently inhibits blood coagulation, possibly by inhibiting thrombin activation. Also induces local edema a few hours after injection in the hind foot. Exhibits high hydrolytic activities toward L-dipalmitoyl phosphatidylcholine. PLA2 catalyzes the calcium-dependent hydrolysis of the 2-acyl groups in 3-sn-phosphoglycerides. This Craspedocephalus puniceus (Flat-nosed pitviper) protein is Basic phospholipase A2 Tpu-G6D49.